We begin with the raw amino-acid sequence, 327 residues long: 2-methoxy-6-polyprenyl-1,4-benzoquinol methylase, mitochondrial (327 aa).

The transit peptide at 1–49 (MAAPRCCVLWRVCGRGWWRATGHCRLPGCHRSWPWATLGTRSLSQEKRA) directs the protein to the mitochondrion. S-adenosyl-L-methionine-binding positions include Thr117, Asp171, and 199–200 (DA).

The protein belongs to the class I-like SAM-binding methyltransferase superfamily. MenG/UbiE family. Component of a multi-subunit COQ enzyme complex, composed of at least COQ3, COQ4, COQ5, COQ6, COQ7 and COQ9. Interacts with PYURF; the interaction is direct, stabilizes COQ5 protein and associates PYURF with COQ enzyme complex.

It is found in the mitochondrion inner membrane. The enzyme catalyses 2-methoxy-6-(all-trans-decaprenyl)benzene-1,4-diol + S-adenosyl-L-methionine = 5-methoxy-2-methyl-3-(all-trans-decaprenyl)benzene-1,4-diol + S-adenosyl-L-homocysteine + H(+). The protein operates within cofactor biosynthesis; ubiquinone biosynthesis. Its function is as follows. Methyltransferase required for the conversion of 2-decaprenyl-6-methoxy-1,4-benzoquinol (DDMQH2) to 2-decaprenyl-3-methyl-6-methoxy-1,4-benzoquinol (DMQH2). The chain is 2-methoxy-6-polyprenyl-1,4-benzoquinol methylase, mitochondrial from Mus musculus (Mouse).